A 125-amino-acid polypeptide reads, in one-letter code: Larval cuticle protein LCP-14 (125 aa).

The N-terminal stretch at 1–16 (MKSFIVALCVVGCVLA) is a signal peptide. The Chitin-binding type R&amp;R domain occupies 33 to 102 (EGSYNYAFES…PQADFLPTPP (70 aa)).

Its function is as follows. Component of the cuticle of the larva of tobacco hornworm. The polypeptide is Larval cuticle protein LCP-14 (LCP-14) (Manduca sexta (Tobacco hawkmoth)).